The chain runs to 830 residues: Probable glucan 1,3-beta-glucosidase D (830 aa).

Residues 1–34 show a composition bias toward basic and acidic residues; that stretch reads MPSQSRSRDRYRGRDTEYTRRRYPDEHDYSHDDH. Residues 1 to 279 are disordered; that stretch reads MPSQSRSRDR…PPMDARWPKG (279 aa). At 1–301 the chain is on the cytoplasmic side; it reads MPSQSRSRDR…GRPFWKQKKW (301 aa). Over residues 35–51 the composition is skewed to acidic residues; sequence DYDYDDDDDDNDDLEQD. Basic and acidic residues-rich tracts occupy residues 52–98 and 110–175; these read VTER…ERRR and QHRE…KHQS. Residues 181 to 194 are compositionally biased toward low complexity; the sequence is SASHLLSADALARL. Composition is skewed to basic and acidic residues over residues 198 to 215, 228 to 243, and 253 to 264; these read YEKEDRRERAHAKDAAKA, EQERGLRAEKPRDRSR, and EEGRGPEMEFRR. A helical; Signal-anchor for type II membrane protein membrane pass occupies residues 302–322; that stretch reads LIGIGVVILILVIVIPVAVVV. Over 323 to 830 the chain is Extracellular; that stretch reads SKKHNDKPNA…PDFGSLPEYY (508 aa). The interval 327 to 351 is disordered; sequence NDKPNATTTQPDGTTPSNSNLDGLS. Residues 330–348 show a composition bias toward polar residues; that stretch reads PNATTTQPDGTTPSNSNLD. Residues asparagine 331, asparagine 376, asparagine 381, asparagine 393, asparagine 546, and asparagine 558 are each glycosylated (N-linked (GlcNAc...) asparagine). The Proton donor role is filled by glutamate 597. Asparagine 610, asparagine 636, asparagine 669, and asparagine 689 each carry an N-linked (GlcNAc...) asparagine glycan. Glutamate 701 (nucleophile) is an active-site residue.

Belongs to the glycosyl hydrolase 5 (cellulase A) family.

Its subcellular location is the cell membrane. The catalysed reaction is Successive hydrolysis of beta-D-glucose units from the non-reducing ends of (1-&gt;3)-beta-D-glucans, releasing alpha-glucose.. Functionally, glucosidase involved in the degradation of cellulosic biomass. Active on lichenan. The chain is Probable glucan 1,3-beta-glucosidase D (exgD) from Aspergillus clavatus (strain ATCC 1007 / CBS 513.65 / DSM 816 / NCTC 3887 / NRRL 1 / QM 1276 / 107).